Consider the following 141-residue polypeptide: Hemoglobin subunit alpha-A (141 aa).

A Globin domain is found at V1–R141. H58 provides a ligand contact to O2. H87 is a binding site for heme b.

The protein belongs to the globin family. As to quaternary structure, heterotetramer of two alpha chains and two beta chains. Red blood cells.

Its function is as follows. Involved in oxygen transport from the lung to the various peripheral tissues. The sequence is that of Hemoglobin subunit alpha-A (HBAA) from Caretta caretta (Loggerhead sea turtle).